We begin with the raw amino-acid sequence, 236 residues long: 7-cyano-7-deazaguanine synthase (236 aa).

12-22 contacts ATP; sequence FSGGQDSTTCL. Positions 200, 215, 218, and 221 each coordinate Zn(2+).

The protein belongs to the QueC family. The cofactor is Zn(2+).

It carries out the reaction 7-carboxy-7-deazaguanine + NH4(+) + ATP = 7-cyano-7-deazaguanine + ADP + phosphate + H2O + H(+). The protein operates within purine metabolism; 7-cyano-7-deazaguanine biosynthesis. Its function is as follows. Catalyzes the ATP-dependent conversion of 7-carboxy-7-deazaguanine (CDG) to 7-cyano-7-deazaguanine (preQ(0)). The protein is 7-cyano-7-deazaguanine synthase of Bradyrhizobium sp. (strain ORS 278).